Consider the following 65-residue polypeptide: Large ribosomal subunit protein bL35 (65 aa).

Residues 1–52 (MPKIKTNRGAAKRFKRTGSGGFKCVQSHRRHILTKKSTKRKRQLRSPDMVHP) form a disordered region. Over residues 26–44 (QSHRRHILTKKSTKRKRQL) the composition is skewed to basic residues.

Belongs to the bacterial ribosomal protein bL35 family.

The chain is Large ribosomal subunit protein bL35 from Methylococcus capsulatus (strain ATCC 33009 / NCIMB 11132 / Bath).